A 164-amino-acid chain; its full sequence is 2-C-methyl-D-erythritol 2,4-cyclodiphosphate synthase (164 aa).

A divalent metal cation is bound by residues Asp-8 and His-10. 4-CDP-2-C-methyl-D-erythritol 2-phosphate is bound by residues 8-10 (DVH) and 34-35 (HS). His-42 is an a divalent metal cation binding site. Residues 56–58 (DIG), 132–135 (TTEE), Phe-139, and Lys-142 each bind 4-CDP-2-C-methyl-D-erythritol 2-phosphate.

The protein belongs to the IspF family. In terms of assembly, homotrimer. Requires a divalent metal cation as cofactor.

It catalyses the reaction 4-CDP-2-C-methyl-D-erythritol 2-phosphate = 2-C-methyl-D-erythritol 2,4-cyclic diphosphate + CMP. The protein operates within isoprenoid biosynthesis; isopentenyl diphosphate biosynthesis via DXP pathway; isopentenyl diphosphate from 1-deoxy-D-xylulose 5-phosphate: step 4/6. Involved in the biosynthesis of isopentenyl diphosphate (IPP) and dimethylallyl diphosphate (DMAPP), two major building blocks of isoprenoid compounds. Catalyzes the conversion of 4-diphosphocytidyl-2-C-methyl-D-erythritol 2-phosphate (CDP-ME2P) to 2-C-methyl-D-erythritol 2,4-cyclodiphosphate (ME-CPP) with a corresponding release of cytidine 5-monophosphate (CMP). In Clostridium kluyveri (strain NBRC 12016), this protein is 2-C-methyl-D-erythritol 2,4-cyclodiphosphate synthase.